Reading from the N-terminus, the 458-residue chain is ATP synthase subunit beta (458 aa).

Residue 148–155 (GGAGVGKT) coordinates ATP.

It belongs to the ATPase alpha/beta chains family. As to quaternary structure, F-type ATPases have 2 components, CF(1) - the catalytic core - and CF(0) - the membrane proton channel. CF(1) has five subunits: alpha(3), beta(3), gamma(1), delta(1), epsilon(1). CF(0) has three main subunits: a(1), b(2) and c(9-12). The alpha and beta chains form an alternating ring which encloses part of the gamma chain. CF(1) is attached to CF(0) by a central stalk formed by the gamma and epsilon chains, while a peripheral stalk is formed by the delta and b chains.

It is found in the cell inner membrane. The catalysed reaction is ATP + H2O + 4 H(+)(in) = ADP + phosphate + 5 H(+)(out). In terms of biological role, produces ATP from ADP in the presence of a proton gradient across the membrane. The catalytic sites are hosted primarily by the beta subunits. The sequence is that of ATP synthase subunit beta from Francisella tularensis subsp. novicida (strain U112).